The sequence spans 101 residues: Small ribosomal subunit protein bS18c (101 aa).

This sequence belongs to the bacterial ribosomal protein bS18 family. Part of the 30S ribosomal subunit.

Its subcellular location is the plastid. It is found in the chloroplast. The sequence is that of Small ribosomal subunit protein bS18c from Gossypium barbadense (Sea Island cotton).